The primary structure comprises 348 residues: Probable dual-specificity RNA methyltransferase RlmN (348 aa).

Residue Glu-93 is the Proton acceptor of the active site. The Radical SAM core domain maps to 99 to 333 (TEKRLTACLS…VSLRKSRGLD (235 aa)). Cysteines 106 and 338 form a disulfide. [4Fe-4S] cluster is bound by residues Cys-113, Cys-117, and Cys-120. S-adenosyl-L-methionine is bound by residues 160–161 (GE), Ser-190, 219–221 (SLH), and Asn-295. Residue Cys-338 is the S-methylcysteine intermediate of the active site.

The protein belongs to the radical SAM superfamily. RlmN family. The cofactor is [4Fe-4S] cluster.

It is found in the cytoplasm. It carries out the reaction adenosine(2503) in 23S rRNA + 2 reduced [2Fe-2S]-[ferredoxin] + 2 S-adenosyl-L-methionine = 2-methyladenosine(2503) in 23S rRNA + 5'-deoxyadenosine + L-methionine + 2 oxidized [2Fe-2S]-[ferredoxin] + S-adenosyl-L-homocysteine. The enzyme catalyses adenosine(37) in tRNA + 2 reduced [2Fe-2S]-[ferredoxin] + 2 S-adenosyl-L-methionine = 2-methyladenosine(37) in tRNA + 5'-deoxyadenosine + L-methionine + 2 oxidized [2Fe-2S]-[ferredoxin] + S-adenosyl-L-homocysteine. Functionally, specifically methylates position 2 of adenine 2503 in 23S rRNA and position 2 of adenine 37 in tRNAs. This chain is Probable dual-specificity RNA methyltransferase RlmN, found in Prochlorococcus marinus (strain AS9601).